The primary structure comprises 176 residues: Nuclear transcription factor Y subunit B-10 (176 aa).

Gly residues predominate over residues 1–15 (MAESQTGGGGGGSHE). A disordered region spans residues 1–29 (MAESQTGGGGGGSHESGGDQSPRSLNVRE). Ala2 is modified (N-acetylalanine). Residues 34–40 (LPIANIS) mediate DNA binding. The segment at 61–72 (MQECVSEFISFV) is subunit association domain (SAD). The disordered stretch occupies residues 121-176 (GDTKGSGKGGESSAKRDGQPSQVSQFSQVPQQGSFSQGPYGNSQGSNMMVQMPGTE). Low complexity predominate over residues 139 to 159 (QPSQVSQFSQVPQQGSFSQGP). Positions 160–169 (YGNSQGSNMM) are enriched in polar residues.

The protein belongs to the NFYB/HAP3 subunit family. Heterotrimeric transcription factor composed of three components, NF-YA, NF-YB and NF-YC. NF-YB and NF-YC must interact and dimerize for NF-YA association and DNA binding. In terms of tissue distribution, expressed in the whole plant, except roots.

The protein localises to the nucleus. In terms of biological role, component of the NF-Y/HAP transcription factor complex. The NF-Y complex stimulates the transcription of various genes by recognizing and binding to a CCAAT motif in promoters. The sequence is that of Nuclear transcription factor Y subunit B-10 (NFYB10) from Arabidopsis thaliana (Mouse-ear cress).